A 2481-amino-acid polypeptide reads, in one-letter code: Serine/threonine-protein kinase TOR (2481 aa).

Positions 1-31 (MSTSSQSFVAGRPASMASPSQSHRFCGPSAT) are disordered. 8 HEAT repeats span residues 205 to 242 (VHVPEFVDAIWVALRDPQLQVRERAVEALRACLRVIEK), 292 to 329 (SRYREVAEIVLRYLEHRDRLVRLSITSLLPRIAHFLRD), 373 to 410 (HYLPTIMSHLRDAIAPRKGRPLLEAVACVGNIAKAMGS), 434 to 471 (DALDQITISIPSLLPTVQDRLLDCISLVLSKSHYSQAK), 569 to 607 (RLVEEIVEKLLRTAVADADVTVRKSIFVALFGNQCFDDY), 608 to 645 (LAQADSLTAIFASLNDEDLDVREYAISVAGRLSEKNPA), 737 to 775 (QYIPELMPLIVEALMDGAAVAKREVAVSTLGQVVQSTGY), and 781 to 819 (KEYPLLLGLLLKLLKGDLVWSTRREVLKVLGIMGALDPH). Residues 823–847 (RNQQSLSGSHGEVPRGTGDSGQPIP) are disordered. HEAT repeat units lie at residues 866–904 (YYSTVAINSLMRILRDASLLSYHKRVVRSLMIIFKSMGL), 908–945 (PYLPKVLPELFHTVRTSDENLKDFITWGLGTLVSIVRQ), 952–992 (PELL…ALND), 996–1036 (TYLP…GTLD), 1037–1075 (EHMHLLLPALIRLFKVDAPVAIRRDAIKTLTRVIPCVQV), and 1077–1114 (GHISALVHHLKLVLDGKNDELRKDAVDALCCLAHALGE). The segment at 1179–1204 (DPFEEGTDRNHQVNDGRLRTAGEASQ) is disordered. Residues 1184-1198 (GTDRNHQVNDGRLRT) show a composition bias toward basic and acidic residues. An FAT domain is found at 1309–1887 (LLGALAEKCR…MYPLLVACKS (579 aa)). 2 short sequence motifs (nuclear localization signal) span residues 1505–1512 (VRRAKYDE) and 2075–2080 (KQRPRK). Residues 2065–2378 (FSRQLVVITS…DEDPADIDLP (314 aa)) form the PI3K/PI4K catalytic domain. Residues 2071 to 2077 (VITSKQR) form a G-loop region. The tract at residues 2244-2252 (GLGDRHPSN) is catalytic loop. The activation loop stretch occupies residues 2264 to 2289 (HIDFGDCFEASMNREKFPEKVPFRLT). Residues 2354-2384 (NNNPNAPADVEPDEEDEDPADIDLPQPQRST) form a disordered region. Residues 2363–2374 (VEPDEEDEDPAD) are compositionally biased toward acidic residues. Ser2424 is modified (phosphoserine). The 33-residue stretch at 2449-2481 (HGLSVKVQVQKLINQATSHENLCQNYVGWCPFW) folds into the FATC domain.

Belongs to the PI3/PI4-kinase family. In terms of assembly, interacts with RAPTOR1 and itself. Interacts with FKBP12 in a rapamycin-dependent manner. Binds to LST8-1. Hyperactivated upon interaction with cauliflower mosaic virus (CaMV) Tav protein. Activated by phosphorylation on Ser-2424 triggered by cauliflower mosaic virus P6 and auxin. In terms of tissue distribution, highly expressed in root meristems, shoot apical meristem (SAM) and floral buds.

The protein resides in the cytoplasm. It localises to the nucleus. It catalyses the reaction L-seryl-[protein] + ATP = O-phospho-L-seryl-[protein] + ADP + H(+). The enzyme catalyses L-threonyl-[protein] + ATP = O-phospho-L-threonyl-[protein] + ADP + H(+). Almost insensitive to rapamycin. Strongly repressed by specific active site inhibitors (asTORis) such as AZD-8055, TORIN2 and WYE-132, and, to a lesser extent, by KU63794, WYE-354 and TORIN1, leading to impaired photoautotrophic growth and abnormally early meristematic cells differentiation. Repression by TORIN1 leads to impaired responses to auxin, including gravitropism. Combined treatment with rapamycin and active-site inhibitors (e.g. Torin1 and AZD-8055) results in synergistic inhibition of activity and plant growth. Inhibition by KU63794 leads to reduced auxin content in root tips. AZD-8055 treatment reduces abscisic acid (ABA) levels. In addition, inhibition by AZD-8055 leads to a strong reduction of watermelon mosaic virus (WMV) infection. Essential cell growth regulator that controls development from early embryo to seed production. Controls plant growth in environmental stress conditions. Acts through the phosphorylation of downstream effectors that are recruited by the binding partner RAPTOR. Acts by activating transcription, protein synthesis and ribosome biogenesis, and inhibiting mRNA degradation and autophagy. Can phosphorylate TAP46, a regulatory subunit of protein phosphatase 2A that modulates cell growth and survival. Involved in modulating the transition from heterotrophic to photoautotrophic growth by regulating the expression of chloroplast- and photosynthesis-associated genes. Essential for auxin signaling transduction, probably acting in polysomes to maintain the active ATPK1/S6K1 (and thus TIF3H1/eIF3h) phosphorylation status that is critical for translation reinitiation (e.g. uORF-mRNAs loading). Promotes abscisic acid (ABA) biosynthesis. Involved in the regulation of sugar-mediated (e.g. glucose and sucrose) glycolysis- and mitochondrial bioenergetics-dependent root growth promotion. Required for sugar (e.g. glucose) promotion of hypocotyl elongation in the dark, by activating the brassinosteroid pathway and stabilizing BZR1. The regulation of BZR1 degradation is dependent on autophagy. Regulates the expression, phosphorylation and ribosome association of MRFs (e.g. MRF1, MRF3 and MRF4), especially under energy-deficient conditions. Its function is as follows. (Microbial infection) Binding to cauliflower mosaic virus (CaMV) Tav protein is critical for both translation reinitiation and viral fitness. When activated by CaMV P6, promotes CaMV translation by inhibiting cellular autophagy and suppressing both silencing and innate immunity, thus conferring sensitivity to P.syringae. In terms of biological role, (Microbial infection) Required during infection by some potyvirus such as Watermelon mosaic virus (WMV) but not for turnip mosaic virus (TuMV). The chain is Serine/threonine-protein kinase TOR from Arabidopsis thaliana (Mouse-ear cress).